The chain runs to 915 residues: Isoleucine--tRNA ligase (915 aa).

The short motif at 64–74 is the 'HIGH' region element; it reads PYANGNFHVGH. Glu557 contacts L-isoleucyl-5'-AMP. The short motif at 598-602 is the 'KMSKS' region element; that stretch reads AMSKS. Lys601 serves as a coordination point for ATP. Cys887, Cys890, Cys902, and Cys905 together coordinate Zn(2+).

It belongs to the class-I aminoacyl-tRNA synthetase family. IleS type 1 subfamily. In terms of assembly, monomer. It depends on Zn(2+) as a cofactor.

The protein localises to the cytoplasm. The catalysed reaction is tRNA(Ile) + L-isoleucine + ATP = L-isoleucyl-tRNA(Ile) + AMP + diphosphate. In terms of biological role, catalyzes the attachment of isoleucine to tRNA(Ile). As IleRS can inadvertently accommodate and process structurally similar amino acids such as valine, to avoid such errors it has two additional distinct tRNA(Ile)-dependent editing activities. One activity is designated as 'pretransfer' editing and involves the hydrolysis of activated Val-AMP. The other activity is designated 'posttransfer' editing and involves deacylation of mischarged Val-tRNA(Ile). This is Isoleucine--tRNA ligase from Leptospira biflexa serovar Patoc (strain Patoc 1 / ATCC 23582 / Paris).